The chain runs to 82 residues: Small ribosomal subunit protein uS17c (82 aa).

Belongs to the universal ribosomal protein uS17 family. As to quaternary structure, part of the 30S ribosomal subunit.

It localises to the plastid. Its subcellular location is the chloroplast. Its function is as follows. One of the primary rRNA binding proteins, it binds specifically to the 5'-end of 16S ribosomal RNA. The polypeptide is Small ribosomal subunit protein uS17c (rps17) (Emiliania huxleyi (Coccolithophore)).